A 497-amino-acid polypeptide reads, in one-letter code: Vacuolar-processing enzyme beta-isozyme 1 (497 aa).

The first 23 residues, 1 to 23 (MAARCWVWGFVVALLAVAAAADG), serve as a signal peptide directing secretion. The N-linked (GlcNAc...) asparagine glycan is linked to Asn153. The active site involves His180. The Nucleophile role is filled by Cys222. Cys255 and Cys269 are oxidised to a cystine. N-linked (GlcNAc...) asparagine glycosylation is present at Asn340. 2 cysteine pairs are disulfide-bonded: Cys432–Cys462 and Cys444–Cys479.

This sequence belongs to the peptidase C13 family. Post-translationally, auto-catalytic activation. Expressed in developing seeds.

The protein resides in the protein storage vacuole. It carries out the reaction Hydrolysis of proteins and small molecule substrates at -Asn-|-Xaa- bonds.. In terms of biological role, asparagine-specific endopeptidase that may be involved in processing of proteins targeted to vacuoles. Cysteine protease required for post-translational proteolysis of seed storage proteins in the protein storage vacuole (PSV) of developing seeds, by processing of proglutelin precursor to mature glutelin subunits, thus contributing to the formation of protein crystalline structures in PSV. The sequence is that of Vacuolar-processing enzyme beta-isozyme 1 from Oryza sativa subsp. japonica (Rice).